We begin with the raw amino-acid sequence, 216 residues long: uncharacterized protein (216 aa).

Residues 182 to 193 (STSNASVNSDDA) are compositionally biased toward polar residues. The interval 182–204 (STSNASVNSDDASTAELGPTSEE) is disordered.

This is an uncharacterized protein from Caenorhabditis elegans.